The primary structure comprises 403 residues: Glucose-signaling factor 2 (403 aa).

The Lumenal segment spans residues 1 to 177 (MEIYIRLNAD…QEVQANYSSL (177 aa)). N-linked (GlcNAc...) asparagine glycosylation is found at Asn89 and Asn173. The helical; Signal-anchor for type II membrane protein transmembrane segment at 178-198 (VAQWLFFVMHIFKVGIITLFL) threads the bilayer. Over 199–403 (KLGIANPISF…IKKNDLKKSN (205 aa)) the chain is Cytoplasmic. Residues 330–388 (ELENNLKKILEEYDGDIGKMNAEIRRFRRFGIYEPDEKLASLVKLRREIADEKEKASNN) adopt a coiled-coil conformation.

Its subcellular location is the endoplasmic reticulum membrane. Functionally, may be involved in the secretion of hexose transporters from the endoplasmic reticulum. Involved in secretion of GAL2 and HXT1. This Saccharomyces cerevisiae (strain ATCC 204508 / S288c) (Baker's yeast) protein is Glucose-signaling factor 2 (GSF2).